The sequence spans 779 residues: MAFSKNILDSLPPLISKQIFEGFFGFEKENIRVDSRGKLALTPHPRELGEKTSHPYITTDFSESQIEIITPPLPSIAESLGFLETLHDLVSIELKDEYLWPQSAPPILPEREEDIPIAHFGGEFREQEEYRLQLAKIYGRKRQMFSGIHFNISLPERFLELLHEEGKQEQPFAEFREDIYMKTVRNFLRHRWFLICLLGASPVIHKSYRKHCIDMLSPFAKDAYHFPYATSIRNNICGYRNTQDFHLNYSTLTDYRESLQELVEKKVLRDIRENYAPIRIKTTTDPKRINHLEIRLLDLNPFFKTGVNPLHAEIIHIFLIYCLLCPEETSFTSKEQETANRNQEQAATEGLNPGAIICDADGNEQRLDKQLAHCLQEIQQTVSPHLPPEYRAGMEELERLVQNQASRPTDTLLKEIKQEGFTEWHMKQALKFLKKSHDEQFIFHGLRDMELSTQLLLRRAALRGVSFEIMDRQENFVCLEQAGKREYVMQASRTSLDNYISVLSMENKVITKKILDQAGINTPKGRSYSSPSEALADYPYYRGRAIVIKPKSTNFGIGITIIKENNRHDFFAQGIAQAFKHEATVLIENFSSGKEYRFFIVNDQVVGILHRVPANVTGDGTSSVQVLVTEKNKNPLRGRGYRTPLEKIKLEETEEMFLASQGYSFATVPAKDQRIYLRENSNISTGGDSIDFTDKVPQSYKDIAVRAAQALQVKITGLDMMIDSLEEDAAEDNFSIIELNFNPAIHIHCHPYIGKNRHLDDKILDALGFTGAEEAGEKA.

Residues 1 to 346 (MAFSKNILDS…ETANRNQEQA (346 aa)) are glutamate--cysteine ligase. The ATP-grasp domain occupies 512–768 (KKILDQAGIN…LDDKILDALG (257 aa)). 539-597 (PYYRGRAIVIKPKSTNFGIGITIIKENNRHDFFAQGIAQAFKHEATVLIENFSSGKEYR) contacts ATP. Mg(2+) is bound by residues Asp-719, Glu-738, and Asn-740. Mn(2+) contacts are provided by Asp-719, Glu-738, and Asn-740.

In the N-terminal section; belongs to the glutamate--cysteine ligase type 1 family. Type 2 subfamily. Monomer. Mg(2+) serves as cofactor. Requires Mn(2+) as cofactor.

The catalysed reaction is L-cysteine + L-glutamate + ATP = gamma-L-glutamyl-L-cysteine + ADP + phosphate + H(+). It catalyses the reaction gamma-L-glutamyl-L-cysteine + glycine + ATP = glutathione + ADP + phosphate + H(+). The protein operates within sulfur metabolism; glutathione biosynthesis; glutathione from L-cysteine and L-glutamate: step 1/2. It functions in the pathway sulfur metabolism; glutathione biosynthesis; glutathione from L-cysteine and L-glutamate: step 2/2. In terms of biological role, synthesizes glutathione from L-glutamate and L-cysteine via gamma-L-glutamyl-L-cysteine. The polypeptide is Glutathione biosynthesis bifunctional protein GshAB (Desulfotalea psychrophila (strain LSv54 / DSM 12343)).